The sequence spans 238 residues: Small ribosomal subunit protein uS2 (238 aa).

The protein belongs to the universal ribosomal protein uS2 family.

In Haemophilus ducreyi (strain 35000HP / ATCC 700724), this protein is Small ribosomal subunit protein uS2.